The chain runs to 258 residues: Redox-sensing transcriptional repressor Rex (258 aa).

Positions 26–65 (LYLRALTALSERSVPTVSSEELAAAAGVNSAKLRKDFSYL) form a DNA-binding region, H-T-H motif. An NAD(+)-binding site is contributed by 100-105 (GIGNLG). A disordered region spans residues 219–258 (AGEEAAADGAAPPVAARKQQRSTGSADQGPDGDVPAVMPA). The span at 225-234 (ADGAAPPVAA) shows a compositional bias: low complexity.

This sequence belongs to the transcriptional regulatory Rex family. In terms of assembly, homodimer.

The protein resides in the cytoplasm. Modulates transcription of respiratory genes in response to changes in cellular NADH/NAD(+) redox state. Binds to the DNA sequence motif 5'-TGTGAACGCGTTCACA-3' in the promoter of the cydABCD operon. May play a general role as a sensor of cellular redox balance. The chain is Redox-sensing transcriptional repressor Rex from Streptomyces coelicolor (strain ATCC BAA-471 / A3(2) / M145).